The chain runs to 275 residues: Interleukin-2 receptor subunit alpha (275 aa).

Residues 1 to 21 form the signal peptide; that stretch reads MEPSLLMWRFFVFIVVPGCVT. The Sushi 1 domain maps to 22-81; the sequence is EACHDDPPSLRNAMFKVFRYEVGTMINCDCKTGFRRVSAVMRCVGDSSHSAWENRCFCNS. Topologically, residues 22–243 are extracellular; that stretch reads EACHDDPPSL…DTFIFTTEYQ (222 aa). 3 disulfides stabilise this stretch: Cys24–Cys64, Cys49–Cys77, and Cys51–Cys79. Residue Asn80 is glycosylated (N-linked (GlcNAc...) asparagine). The disordered stretch occupies residues 88-130; that stretch reads QVKQVTPAPEEHREKKHTDAQNQTQPPEEADLPGHCEEPPPWE. Basic and acidic residues predominate over residues 96-106; the sequence is PEEHREKKHTD. Asn109 is a glycosylation site (N-linked (GlcNAc...) asparagine). Residues 119 to 130 are compositionally biased toward basic and acidic residues; the sequence is LPGHCEEPPPWE. Residues 121–186 form the Sushi 2 domain; that stretch reads GHCEEPPPWE…WTRPRLKCIR (66 aa). Cystine bridges form between Cys123/Cys168 and Cys152/Cys184. The disordered stretch occupies residues 188-221; sequence GEHGQASDDAEPQESTEAPPGSGTFLPTRMAGTT. Residues 244–262 traverse the membrane as a helical segment; it reads IAVAGCTLLLASILLLSCL. Residues 263-275 lie on the Cytoplasmic side of the membrane; the sequence is TWQRKWKKNRRTI.

Non-covalent dimer of an alpha and a beta subunit. IL2R exists in 3 different forms: a high affinity dimer, an intermediate affinity monomer (beta subunit), and a low affinity monomer (alpha subunit). The high and intermediate affinity forms also associate with a gamma subunit.

The protein resides in the membrane. Functionally, receptor for interleukin-2. The receptor is involved in the regulation of immune tolerance by controlling regulatory T cells (TREGs) activity. TREGs suppress the activation and expansion of autoreactive T-cells. The sequence is that of Interleukin-2 receptor subunit alpha (IL2RA) from Bos taurus (Bovine).